The sequence spans 131 residues: MRHRHGLRKLNRTSSHRLAMLRNMSNSLIEHEVIKTTLPKAKELRKVVEPLITLGKKPSLANRRLAFNRLRDRDSVAKLFDVLGPRFANRPGGYLRILKFGFRVGDNAPMALVELLDRPEVEETENVQEAE.

It belongs to the bacterial ribosomal protein bL17 family. In terms of assembly, part of the 50S ribosomal subunit. Contacts protein L32.

This Burkholderia mallei (strain NCTC 10229) protein is Large ribosomal subunit protein bL17.